The sequence spans 93 residues: Parbolysin P2 (93 aa).

2 disulfides stabilise this stretch: cysteine 16–cysteine 37 and cysteine 22–cysteine 33.

It belongs to the worm cytolysin family. As to expression, localized within the skin and proboscis and are most readily isolated from body mucus secretions.

It localises to the secreted. Cytolysin that shows hemolytic activity (on bovine erythrocytes, HC(50)=5.75 mg/ml). This hemolytic activity is completely inhibited by small unilamelar vesicles composed of PC/PG, PC/PI and PC/PS in 1:1 molar ratios (with at least 100 mg/ml concentration). The protein is Parbolysin P2 of Parborlasia corrugatus (Antarctic nemertean worm).